The primary structure comprises 1358 residues: MTDYILPGPKALSQFRVDNLIKDINSYTNSTSVINELRSCYIHYVNGIAQNLSEQDTKLLEVLLTYDSALDIANDPLARQLNDAVANNLPSSALGEDTYLIRVVPRSGTISPWSSKATNIAHVCGLQDKVQRIERGLALLIKTVPGFPLLENLNDISLKCVYDRMTQQLYLTEPPNTMSIFTHEEPKPLVHVPLTPKDTKQSPKDILSKANTELGLALDSGEMEYLIHAFVETMKRDPTDVELFMFAQVNSEHCRHKIFNADWTIDGIKQQFTLFQMIRNTHKLNPEYTISAYSDNAAVLDSENDAFFFAPNSTTKEWTSTKERIPLLIKVETHNHPTAVSPFPGAATGSGGEIRDEGATGRGSKTKCGLSGFSVSDLLIPGNEQPWELNIGKPYHIASALDIMIEAPLGSAAFNNEFGRPCINGYFRTLTTKVLNHQGKEEIRGFHKPIMIAGGFGTVRPQFALKNTPITPGSCLIVLGGQSMLIGLGGGAASSVASGEGSADLDFASVQRGNPEMERRCQQVIDACVALGNNNPIQSIHDVGAGGLSNALPELVHDNDLGAKFDIRKVLSLEPGMSPMEIWCNESQERYVLGVSPQDLSIFEEICKRERAPFAVVGHATAEQKLIVEDPLLKTTPIDLEMPILFGKPPKMSRETITEALNLPEANLSEIPSLQDAIQRVLNLPSVGSKSFLITIGDRSVTGLIDRDQFVGPWQVPVADVGVTGTSLGETIISTGEAMAMGEKPVNALISASASAKLSVAESLLNIFAADVKSLNHIKLSANWMSPASHQGEGSKLYEAVQALGLDLCPALGVAIPVGKDSMSMKMKWDDKEVTAPLSLNITAFAPVFNTSKTWTPLLNRNTDDSVLVLVDLSAKQETKSLGASALLQVYNQVGNKSPTVYDNAILKGFLESLIQLHQQKEDIVLAYHDRSDGGLLITLLEMAFASRCGLEINIDGGDLESQLTNLFNEELGAVFQISAKNLSKFEKILNENGVAKEYISIVGKPSFQSQEIKIINSTTNDVIYANSRSELEQTWSKTSYEMQKLRDNPKTAEEEFASITDDRDPGLQYALTYNPADDMKIGLELSSQRPKVAILREQGVNGQMEMAWCFQQAGFNSVDVTMTDLLEGRFHLDDFIGLAACGGFSYGDVLGAGAGWAKSVLYHEGVRSQFSKFFNERQDTFAFGACNGCQFLSRLKDIIPGCENWPSFERNVSEQYEARVCMVQISQEKDNSSEESVFLNGMAGSKLPIAVAHGEGKATFSKSAEQLEKFEKDGLCCIRYVDNYGNVTERFPFNPNGSTNGIAGIKSPNGRVLAMMPHPERVCRLEANSWYPEGKYEEWGGYGPWIRLFRSARRWVG.

An N-acetylthreonine modification is found at Thr2. The tract at residues 339–363 (AVSPFPGAATGSGGEIRDEGATGRG) is disordered. Residues 345–356 (GAATGSGGEIRD), 424–426 (NGY), and Ala719 each bind ATP. Mg(2+) contacts are provided by Asp720, Glu762, Asn766, and Asp930. ATP is bound at residue Ser932. One can recognise a Glutamine amidotransferase type-1 domain in the interval 1093-1358 (VAILREQGVN…LFRSARRWVG (266 aa)). Cys1187 (nucleophile) is an active-site residue. Catalysis depends on residues His1319 and Glu1321.

In the N-terminal section; belongs to the FGAMS family.

The protein localises to the cytoplasm. The catalysed reaction is N(2)-formyl-N(1)-(5-phospho-beta-D-ribosyl)glycinamide + L-glutamine + ATP + H2O = 2-formamido-N(1)-(5-O-phospho-beta-D-ribosyl)acetamidine + L-glutamate + ADP + phosphate + H(+). It functions in the pathway purine metabolism; IMP biosynthesis via de novo pathway; 5-amino-1-(5-phospho-D-ribosyl)imidazole from N(2)-formyl-N(1)-(5-phospho-D-ribosyl)glycinamide: step 1/2. In terms of biological role, phosphoribosylformylglycinamidine synthase involved in the purines biosynthetic pathway. Catalyzes the ATP-dependent conversion of formylglycinamide ribonucleotide (FGAR) and glutamine to yield formylglycinamidine ribonucleotide (FGAM) and glutamate. This is Phosphoribosylformylglycinamidine synthase (ADE6) from Saccharomyces cerevisiae (strain ATCC 204508 / S288c) (Baker's yeast).